The following is a 101-amino-acid chain: Ubiquitin-related modifier 1 homolog (101 aa).

At Gly-101 the chain carries 1-thioglycine. A Glycyl lysine isopeptide (Gly-Lys) (interchain with K-? in acceptor proteins) cross-link involves residue Gly-101.

The protein belongs to the URM1 family. As to quaternary structure, interacts with cer. C-terminal thiocarboxylation occurs in 2 steps, it is first acyl-adenylated (-COAMP) via the hesA/moeB/thiF part of the MOCS3 homolog, then thiocarboxylated (-COSH) via the rhodanese domain of the MOCS3 homolog.

Its subcellular location is the cytoplasm. Its pathway is tRNA modification; 5-methoxycarbonylmethyl-2-thiouridine-tRNA biosynthesis. In terms of biological role, acts as a sulfur carrier required for 2-thiolation of mcm(5)S(2)U at tRNA wobble positions of cytosolic tRNA(Lys), tRNA(Glu) and tRNA(Gln). Serves as sulfur donor in tRNA 2-thiolation reaction by being thiocarboxylated (-COSH) at its C-terminus by MOCS3. The sulfur is then transferred to tRNA to form 2-thiolation of mcm(5)S(2)U. Also acts as a ubiquitin-like protein (UBL) that is covalently conjugated via an isopeptide bond to lysine residues of target proteins such as Prx2/Jafrac1, Ciao1, Eip71CD and GILT1. The thiocarboxylated form serves as substrate for conjugation and oxidative stress specifically induces the formation of UBL-protein conjugates. This is Ubiquitin-related modifier 1 homolog from Drosophila simulans (Fruit fly).